The primary structure comprises 424 residues: Chloroquine resistance transporter (424 aa).

A compositionally biased stretch (basic residues) spans 1 to 10 (MTILKKKKKG). The tract at residues 1 to 32 (MTILKKKKKGSPQITPDERYRELDSHAQNESE) is disordered. Topologically, residues 1 to 57 (MTILKKKKKGSPQITPDERYRELDSHAQNESEIQEDVPISRKIANFLKLAYNEIREN) are cytoplasmic. The span at 16–29 (PDERYRELDSHAQN) shows a compositional bias: basic and acidic residues. The helical transmembrane segment at 58–78 (ISIYLLIIVYLCVCVMNKLLA) threads the bilayer. The Vacuolar segment spans residues 79-89 (KRTLKKIGNYS). N87 carries N-linked (GlcNAc...) asparagine glycosylation. A helical transmembrane segment spans residues 90–110 (FVTSETHNCICMVVFFALYFM). The Cytoplasmic portion of the chain corresponds to 111–124 (FGRRVMSAKERHRN). A helical transmembrane segment spans residues 125-145 (FGVQFLLISLLDACSVIIAFI). Topologically, residues 146–153 (GLTRTTGN) are vacuolar. The chain crosses the membrane as a helical span at residues 154-174 (IQSFVMQLSIPINMFFCFLIL). Residues 175 to 179 (RYRYH) lie on the Cytoplasmic side of the membrane. A helical membrane pass occupies residues 180–200 (LFNYVGAFIIVVTIAVVEFML). Over 201–208 (SFETQEEN) the chain is Vacuolar. The chain crosses the membrane as a helical span at residues 209-229 (SIVFNLVLIASLIPLSFSNMT). The Cytoplasmic segment spans residues 230–246 (REIVFKKYKINILRLNA). The helical transmembrane segment at 247 to 267 (VVSFFQIFTSCLMLPMYTLPF) threads the bilayer. Residues 268–316 (LKQINLPFSEIGTNIKNGFRCLFLGQNTIVENCGLGMSKMCDDCEGAWK) are Vacuolar-facing. Disulfide bonds link C288–C311 and C300–C308. Residues 317–337 (TFIAYSFFNICDNLITSFIIE) traverse the membrane as a helical segment. Residues 338–345 (KFSTMTYT) lie on the Cytoplasmic side of the membrane. Residues 346 to 366 (IVSCIQGPAIAIAYYFKFLAG) form a helical membrane-spanning segment. At 367 to 376 (DAVMQPRMLD) the chain is on the vacuolar side. Residues 377–397 (FVTLFGYLFGSIIYRIGNIIL) traverse the membrane as a helical segment. Residues 398–424 (EKKRMMEAGNDDDSEGELTNADSIITH) are Cytoplasmic-facing.

Belongs to the CRT-like transporter family.

The protein resides in the vacuole membrane. Nutrient transporter. Involved in maintaining the osmotic homeostasis of the digestive vacuole. In Plasmodium vivax (strain Salvador I), this protein is Chloroquine resistance transporter.